Here is a 284-residue protein sequence, read N- to C-terminus: SF-assemblin (284 aa).

The tract at residues 1 to 30 (PTPSPEARVASRPFLDSPLPGSPRSGSPTG) is disordered. Residues 1-38 (PTPSPEARVASRPFLDSPLPGSPRSGSPTGYITATKAI) are nonhelical region. Residues 17–30 (SPLPGSPRSGSPTG) are compositionally biased toward low complexity. The segment at 39 to 284 (SAGKLEHVAE…QDGLRIVNNS (246 aa)) is rod. 2 coiled-coil regions span residues 56–102 (EIEL…QIQV) and 239–268 (LDEI…QAVN).

This sequence belongs to the SF-assemblin family. In terms of processing, consists of at least four isoforms including two phosphorylated.

Its subcellular location is the cytoplasm. It localises to the cytoskeleton. Functionally, major component of the striated microtubule-associated fibers (SMAFs; system-I-fibers). This chain is SF-assemblin, found in Spermatozopsis similis (Green alga).